Reading from the N-terminus, the 325-residue chain is Acetyl-coenzyme A carboxylase carboxyl transferase subunit alpha (325 aa).

Residues 35 to 292 (EINKLEARLE…DDVLKRSLRE (258 aa)) form the CoA carboxyltransferase C-terminal domain.

The protein belongs to the AccA family. In terms of assembly, acetyl-CoA carboxylase is a heterohexamer composed of biotin carboxyl carrier protein (AccB), biotin carboxylase (AccC) and two subunits each of ACCase subunit alpha (AccA) and ACCase subunit beta (AccD).

The protein localises to the cytoplasm. The catalysed reaction is N(6)-carboxybiotinyl-L-lysyl-[protein] + acetyl-CoA = N(6)-biotinyl-L-lysyl-[protein] + malonyl-CoA. Its pathway is lipid metabolism; malonyl-CoA biosynthesis; malonyl-CoA from acetyl-CoA: step 1/1. Its function is as follows. Component of the acetyl coenzyme A carboxylase (ACC) complex. First, biotin carboxylase catalyzes the carboxylation of biotin on its carrier protein (BCCP) and then the CO(2) group is transferred by the carboxyltransferase to acetyl-CoA to form malonyl-CoA. The sequence is that of Acetyl-coenzyme A carboxylase carboxyl transferase subunit alpha from Anoxybacillus flavithermus (strain DSM 21510 / WK1).